Here is a 626-residue protein sequence, read N- to C-terminus: Carnitine O-acetyltransferase (626 aa).

The residue at position 93 (Lys-93) is an N6-succinyllysine. Position 261 is an N6-acetyllysine; alternate (Lys-261). Lys-261 is modified (N6-succinyllysine; alternate). Lys-268 bears the N6-acetyllysine mark. Residue His-343 is the Proton acceptor of the active site. Residues Lys-419 and 423–430 (KSEKLSPD) contribute to the CoA site. (R)-carnitine-binding residues include Tyr-452 and Ser-454. Residue Ser-456 participates in CoA binding. Thr-465 lines the (R)-carnitine pocket. The CoA site is built by Arg-504 and Gln-555. The short motif at 624-626 (AKL) is the Microbody targeting signal element.

It belongs to the carnitine/choline acetyltransferase family. As to quaternary structure, monomer. Mostly in skeletal muscle, less in heart, liver and pancreas, only weakly detectable in brain, placenta, lung and kidney.

It localises to the endoplasmic reticulum. The protein localises to the peroxisome. Its subcellular location is the mitochondrion inner membrane. The protein resides in the mitochondrion. The catalysed reaction is (R)-carnitine + acetyl-CoA = O-acetyl-(R)-carnitine + CoA. It catalyses the reaction propanoyl-CoA + (R)-carnitine = O-propanoyl-(R)-carnitine + CoA. It carries out the reaction butanoyl-CoA + (R)-carnitine = O-butanoyl-(R)-carnitine + CoA. The enzyme catalyses hexanoyl-CoA + (R)-carnitine = O-hexanoyl-(R)-carnitine + CoA. The catalysed reaction is octanoyl-CoA + (R)-carnitine = O-octanoyl-(R)-carnitine + CoA. It catalyses the reaction decanoyl-CoA + (R)-carnitine = O-decanoyl-(R)-carnitine + CoA. It carries out the reaction 3-methylbutanoyl-CoA + (R)-carnitine = O-3-methylbutanoyl-(R)-carnitine + CoA. The enzyme catalyses 2-methylpropanoyl-CoA + (R)-carnitine = O-isobutanoyl-(R)-carnitine + CoA. The catalysed reaction is 2-methylbutanoyl-CoA + (R)-carnitine = O-2-methylbutanoyl-(R)-carnitine + CoA. It catalyses the reaction acetoacetyl-CoA + (R)-carnitine = O-3-oxobutanoyl-(R)-carnitine + CoA. It carries out the reaction 3-hydroxybutanoyl-CoA + (R)-carnitine = O-3-hydroxybutanoyl-(R)-carnitine + CoA. The enzyme catalyses 4,8-dimethylnonanoyl-CoA + (R)-carnitine = O-4,8-dimethylnonanoyl-(R)-carnitine + CoA. The catalysed reaction is 2,6-dimethylheptanoyl-CoA + (R)-carnitine = O-2,6-dimethylheptanoyl-(R)-carnitine + CoA. Catalyzes the reversible transfer of acyl groups from carnitine to coenzyme A (CoA) and regulates the acyl-CoA/CoA ratio. Also plays a crucial role in the transport of fatty acids for beta-oxidation. Responsible for the synthesis of short- and branched-chain acylcarnitines. Active towards some branched-chain amino acid oxidation pathway (BCAAO) intermediates. Trans-2-enoyl-CoAs and 2-methylacyl-CoAs are poor substrates. The protein is Carnitine O-acetyltransferase of Homo sapiens (Human).